Reading from the N-terminus, the 371-residue chain is Bifunctional enzyme IspD/IspF (371 aa).

Residues Met-1–Ile-210 form a 2-C-methyl-D-erythritol 4-phosphate cytidylyltransferase region. The segment at Phe-211 to Leu-371 is 2-C-methyl-D-erythritol 2,4-cyclodiphosphate synthase. A divalent metal cation contacts are provided by Asp-217 and His-219. 4-CDP-2-C-methyl-D-erythritol 2-phosphate is bound by residues Asp-217–His-219 and His-243–Ser-244. Residue His-251 coordinates a divalent metal cation. Residues Asp-265–Gly-267, Tyr-270–Asp-274, Ala-309–Lys-315, Thr-341–Glu-344, Phe-348, and Arg-351 contribute to the 4-CDP-2-C-methyl-D-erythritol 2-phosphate site.

The protein in the N-terminal section; belongs to the IspD/TarI cytidylyltransferase family. IspD subfamily. This sequence in the C-terminal section; belongs to the IspF family. The cofactor is a divalent metal cation.

It catalyses the reaction 2-C-methyl-D-erythritol 4-phosphate + CTP + H(+) = 4-CDP-2-C-methyl-D-erythritol + diphosphate. The enzyme catalyses 4-CDP-2-C-methyl-D-erythritol 2-phosphate = 2-C-methyl-D-erythritol 2,4-cyclic diphosphate + CMP. It participates in isoprenoid biosynthesis; isopentenyl diphosphate biosynthesis via DXP pathway; isopentenyl diphosphate from 1-deoxy-D-xylulose 5-phosphate: step 2/6. It functions in the pathway isoprenoid biosynthesis; isopentenyl diphosphate biosynthesis via DXP pathway; isopentenyl diphosphate from 1-deoxy-D-xylulose 5-phosphate: step 4/6. Functionally, bifunctional enzyme that catalyzes the formation of 4-diphosphocytidyl-2-C-methyl-D-erythritol from CTP and 2-C-methyl-D-erythritol 4-phosphate (MEP) (IspD), and catalyzes the conversion of 4-diphosphocytidyl-2-C-methyl-D-erythritol 2-phosphate (CDP-ME2P) to 2-C-methyl-D-erythritol 2,4-cyclodiphosphate (ME-CPP) with a corresponding release of cytidine 5-monophosphate (CMP) (IspF). This Campylobacter jejuni subsp. jejuni serotype O:2 (strain ATCC 700819 / NCTC 11168) protein is Bifunctional enzyme IspD/IspF.